We begin with the raw amino-acid sequence, 763 residues long: Phosphoglycerol transferase I (763 aa).

4 consecutive transmembrane segments (helical) span residues 1–21, 26–46, 77–97, and 108–128; these read MSEL…AWKA, WWFA…ITLF, ILPG…LGWI, and FGYS…SPAF.

It belongs to the OpgB family.

It localises to the cell inner membrane. It carries out the reaction a phosphatidylglycerol + a membrane-derived-oligosaccharide D-glucose = a 1,2-diacyl-sn-glycerol + a membrane-derived-oligosaccharide 6-(glycerophospho)-D-glucose.. The protein operates within glycan metabolism; osmoregulated periplasmic glucan (OPG) biosynthesis. In terms of biological role, transfers a phosphoglycerol residue from phosphatidylglycerol to the membrane-bound nascent glucan backbones. In Escherichia coli O45:K1 (strain S88 / ExPEC), this protein is Phosphoglycerol transferase I.